We begin with the raw amino-acid sequence, 168 residues long: G/U mismatch-specific DNA glycosylase (168 aa).

It belongs to the uracil-DNA glycosylase (UDG) superfamily. TDG/mug family. In terms of assembly, binds DNA as a monomer.

The protein localises to the cytoplasm. It catalyses the reaction Specifically hydrolyzes mismatched double-stranded DNA and polynucleotides, releasing free uracil.. Functionally, excises ethenocytosine and uracil, which can arise by alkylation or deamination of cytosine, respectively, from the corresponding mispairs with guanine in ds-DNA. It is capable of hydrolyzing the carbon-nitrogen bond between the sugar-phosphate backbone of the DNA and the mispaired base. The complementary strand guanine functions in substrate recognition. Required for DNA damage lesion repair in stationary-phase cells. This is G/U mismatch-specific DNA glycosylase from Salmonella agona (strain SL483).